We begin with the raw amino-acid sequence, 319 residues long: Cytochrome f (319 aa).

Residues 1-34 form the signal peptide; that stretch reads MQNRNTYDLKKKMTRLISVLVMIHIITRTSISNA. Heme contacts are provided by Y35, C55, C58, and H59. Residues 285–304 form a helical membrane-spanning segment; the sequence is VKGLLLFLASVILAQIFLVL.

The protein belongs to the cytochrome f family. As to quaternary structure, the 4 large subunits of the cytochrome b6-f complex are cytochrome b6, subunit IV (17 kDa polypeptide, petD), cytochrome f and the Rieske protein, while the 4 small subunits are PetG, PetL, PetM and PetN. The complex functions as a dimer. Heme is required as a cofactor.

Its subcellular location is the plastid. The protein resides in the chloroplast thylakoid membrane. Component of the cytochrome b6-f complex, which mediates electron transfer between photosystem II (PSII) and photosystem I (PSI), cyclic electron flow around PSI, and state transitions. The protein is Cytochrome f (petA) of Picea abies (Norway spruce).